The chain runs to 57 residues: Large ribosomal subunit protein bL32 (57 aa).

The span at 1–19 (MAVPKRRMSRANTRSRRAQ) shows a compositional bias: basic residues. Residues 1 to 20 (MAVPKRRMSRANTRSRRAQW) form a disordered region.

It belongs to the bacterial ribosomal protein bL32 family.

The polypeptide is Large ribosomal subunit protein bL32 (Mycobacterium avium (strain 104)).